Consider the following 1341-residue polypeptide: Pleckstrin homology domain-containing family G member 3 (1341 aa).

A disordered region spans residues 1–68; the sequence is MPVSTALHQD…PNSNNNSSGW (68 aa). Over residues 18 to 29 the composition is skewed to low complexity; that stretch reads SLVSTTSSSGSS. Composition is skewed to polar residues over residues 42–51 and 59–68; these read SEASAQNGTG and PNSNNNSSGW. Ser-76 carries the phosphoserine modification. A DH domain is found at 93–272; that stretch reads YLGRVVREIV…TCVAWYINDM (180 aa). The 99-residue stretch at 296–394 folds into the PH domain; it reads DLTTYGELVL…WTHHIKRLIL (99 aa). A phosphoserine mark is found at Ser-433 and Ser-502. Positions 433–482 are disordered; it reads SQDEVSSHVRQGRRQSEPGHTLFSRATLPSRQQGFEMPGLKGRRKSEPTR. Disordered regions lie at residues 508–657 and 684–715; these read DFGQ…EFPE and PEGS…LLPP. 2 stretches are compositionally biased toward acidic residues: residues 529 to 541 and 570 to 580; these read ELEE…EEEE and GSEEEEEEEES. Phosphoserine is present on residues Ser-571, Ser-694, Ser-695, Ser-737, Ser-759, Ser-762, and Ser-766. A compositionally biased stretch (acidic residues) spans 695-707; it reads SEEEEEEEMEAAQ. The segment at 775–832 is disordered; the sequence is SIGDSLSNPPTPEVIIGADMVTDNGPSVNGTESPSAGSGCPTEQDRSSCKKKESALST. The segment covering 798–810 has biased composition (polar residues); sequence NGPSVNGTESPSA. A compositionally biased stretch (basic and acidic residues) spans 817-832; it reads EQDRSSCKKKESALST. Phosphoserine occurs at positions 862, 899, 900, and 947. 4 disordered regions span residues 876–930, 939–958, 1071–1097, and 1117–1162; these read SRFN…EFCP, ERME…SQAN, KVTP…SGGK, and HGTS…PFDT. Basic and acidic residues predominate over residues 939–948; it reads ERMESSERSP. Residues 949–958 are compositionally biased toward polar residues; that stretch reads RTGSGQSQAN. 7 positions are modified to phosphoserine: Ser-1129, Ser-1134, Ser-1136, Ser-1141, Ser-1155, Ser-1158, and Ser-1201. Positions 1135–1162 are enriched in polar residues; it reads FSPSAVSPRTTSPGARSSARSPLSPFDT. Disordered regions lie at residues 1204–1249 and 1271–1341; these read ENIV…LNGG and KGPH…NSVG. Positions 1309–1320 are enriched in basic and acidic residues; it reads QPKEHGPRDSAD.

It is found in the cytoplasm. The protein localises to the cytoskeleton. Functionally, plays a role in controlling cell polarity and cell motility by selectively binding newly polymerized actin and activating RAC1 and CDC42 to enhance local actin polymerization. This chain is Pleckstrin homology domain-containing family G member 3, found in Mus musculus (Mouse).